We begin with the raw amino-acid sequence, 415 residues long: L-cysteine:1D-myo-inositol 2-amino-2-deoxy-alpha-D-glucopyranoside ligase 2 (415 aa).

Cysteine 44 is a binding site for Zn(2+). Residues 44-47 (CGIT), threonine 59, and 82-84 (NIT) each bind L-cysteinyl-5'-AMP. The 'HIGH' region signature appears at 46-56 (ITPYDSTHLGH). The short motif at 188-193 (ERGGDP) is the 'ERGGDP' region element. Tryptophan 228 is a binding site for L-cysteinyl-5'-AMP. Cysteine 232 is a binding site for Zn(2+). Residue 250 to 252 (GSD) coordinates L-cysteinyl-5'-AMP. Residue histidine 257 coordinates Zn(2+). L-cysteinyl-5'-AMP is bound at residue isoleucine 284. The 'KMSKS' region signature appears at 290-294 (KMSKS).

This sequence belongs to the class-I aminoacyl-tRNA synthetase family. MshC subfamily. As to quaternary structure, monomer. It depends on Zn(2+) as a cofactor.

It catalyses the reaction 1D-myo-inositol 2-amino-2-deoxy-alpha-D-glucopyranoside + L-cysteine + ATP = 1D-myo-inositol 2-(L-cysteinylamino)-2-deoxy-alpha-D-glucopyranoside + AMP + diphosphate + H(+). Its function is as follows. Catalyzes the ATP-dependent condensation of GlcN-Ins and L-cysteine to form L-Cys-GlcN-Ins. This chain is L-cysteine:1D-myo-inositol 2-amino-2-deoxy-alpha-D-glucopyranoside ligase 2, found in Corynebacterium jeikeium (strain K411).